The sequence spans 195 residues: MVNSCCGSVCSHQGCGRDLCQETCCRPSCCETTCCRTTYCRPSCCVSSCCRPQCCQSVCCQPTCCRPRCCISSCCRPSCCVSSCCKPQCCQSMCCQPTCCRPRCCISSCCRPSCCVSSCCRPQCCQSVCCQPTCCHPSCSISSCCRPSCCESSCCRPCCCLRPVCGRVSCHTTCYRPTCVISSCPRPLCCASSCC.

A run of 27 repeats spans residues 5 to 9 (CCGSV), 24 to 28 (CCRPS), 29 to 33 (CCETT), 34 to 38 (CCRTT), 44 to 48 (CCVSS), 49 to 53 (CCRPQ), 54 to 58 (CCQSV), 59 to 63 (CCQPT), 64 to 68 (CCRPR), 69 to 73 (CCISS), 74 to 78 (CCRPS), 79 to 83 (CCVSS), 84 to 88 (CCKPQ), 89 to 93 (CCQSM), 94 to 98 (CCQPT), 99 to 103 (CCRPR), 104 to 108 (CCISS), 109 to 113 (CCRPS), 114 to 118 (CCVSS), 119 to 123 (CCRPQ), 124 to 128 (CCQSV), 129 to 133 (CCQPT), 134 to 138 (CCHPS), 144 to 148 (CCRPS), 149 to 153 (CCESS), 154 to 158 (CCRPC), and 159 to 163 (CCLRP). A 27 X 5 AA repeats of C-C-[GIKRQVHEL]-[SPTR]-[STVQRMC] region spans residues 5–163 (CCGSVCSHQG…CCRPCCCLRP (159 aa)).

The protein belongs to the KRTAP type 4 family. Interacts with hair keratins. As to expression, expressed in the hair follicles.

In the hair cortex, hair keratin intermediate filaments are embedded in an interfilamentous matrix, consisting of hair keratin-associated proteins (KRTAP), which are essential for the formation of a rigid and resistant hair shaft through their extensive disulfide bond cross-linking with abundant cysteine residues of hair keratins. The matrix proteins include the high-sulfur and high-glycine-tyrosine keratins. The protein is Keratin-associated protein 4-11 (KRTAP4-11) of Homo sapiens (Human).